Reading from the N-terminus, the 77-residue chain is Large ribosomal subunit protein bL28 (77 aa).

This sequence belongs to the bacterial ribosomal protein bL28 family.

This is Large ribosomal subunit protein bL28 from Methylibium petroleiphilum (strain ATCC BAA-1232 / LMG 22953 / PM1).